A 352-amino-acid polypeptide reads, in one-letter code: C-C chemokine receptor type 5 (352 aa).

At M1 to A30 the chain is on the extracellular side. Y3 carries the sulfotyrosine modification. Residues S6 and S7 are each glycosylated (O-linked (GalNAc...) serine). Y10 and Y14 each carry sulfotyrosine. Disulfide bonds link C20–C269 and C101–C178. A helical transmembrane segment spans residues Q31–C58. The Cytoplasmic portion of the chain corresponds to K59 to Y68. A helical membrane pass occupies residues L69 to Y89. Topologically, residues A90 to Q102 are extracellular. The helical transmembrane segment at F103–I124 threads the bilayer. Residues D125–T141 are Cytoplasmic-facing. Residues V142–F166 form a helical membrane-spanning segment. The Extracellular portion of the chain corresponds to T167–M198. Residues V199–L218 form a helical membrane-spanning segment. Residues K219–R235 lie on the Cytoplasmic side of the membrane. Residues L236–Y260 traverse the membrane as a helical segment. Topologically, residues P261–Q277 are extracellular. A helical transmembrane segment spans residues A278–G301. At E302–L352 the chain is on the cytoplasmic side. 3 S-palmitoyl cysteine lipidation sites follow: C321, C323, and C324. 3 positions are modified to phosphoserine; by BARK1: S337, S342, and S349.

The protein belongs to the G-protein coupled receptor 1 family. As to quaternary structure, interacts with PRAF2. Efficient ligand binding to CCL3/MIP-1alpha and CCL4/MIP-1beta requires sulfation, O-glycosylation and sialic acid modifications. Glycosylation on Ser-6 is required for efficient binding of CCL4. Interacts with GRK2. Interacts with ARRB1 and ARRB2. Interacts with CNIH4. Interacts with S100A4; this interaction stimulates T-lymphocyte chemotaxis. In terms of processing, sulfated on at least 2 of the N-terminal tyrosines. Sulfation is required for efficient binding of the chemokines, CCL3 and CCL4. Palmitoylation in the C-terminal is important for cell surface expression. Post-translationally, phosphorylation on serine residues in the C-terminal is stimulated by binding CC chemokines especially by APO-RANTES. In terms of processing, O-glycosylated, but not N-glycosylated. Ser-6 appears to be the major site even if Ser-7 may be also O-glycosylated. Also sialylated glycans present which contribute to chemokine binding. Ser-17 may also be glycosylated and, if so, with small moieties such as a T-antigen.

The protein localises to the cell membrane. Functionally, receptor for a number of inflammatory CC-chemokines including CCL3/MIP-1-alpha, CCL4/MIP-1-beta and RANTES and subsequently transduces a signal by increasing the intracellular calcium ion level. May play a role in the control of granulocytic lineage proliferation or differentiation. Participates in T-lymphocyte migration to the infection site by acting as a chemotactic receptor. The chain is C-C chemokine receptor type 5 (CCR5) from Saimiri sciureus (Common squirrel monkey).